Consider the following 240-residue polypeptide: MGRAYQNRKESMAKTAGQKTRLYSRYGKEIYVVAKQGGVEPDGNLSLRRLIERAKKDQVPAHVIERAIDKAKGGGGEDYDTARYEGFGPGNCMVIVDCLTDNVKRTFTEVRQAFVKNDAKLGTPGTVGHMFDQSAVFVFPGEDEDAILEILMMADVDVNDVEVEDGMISVIAPHTEFFKVKTALTDAMPDINFEVENITFVPQTMTPVSGEDVAVFDKFIAALEDCDDVQNVYHNAEIQD.

Belongs to the TACO1 family.

It is found in the cytoplasm. The chain is Probable transcriptional regulatory protein SO_3401 from Shewanella oneidensis (strain ATCC 700550 / JCM 31522 / CIP 106686 / LMG 19005 / NCIMB 14063 / MR-1).